Here is a 243-residue protein sequence, read N- to C-terminus: Terpene cyclase nodB (243 aa).

The next 3 membrane-spanning stretches (helical) occupy residues 19–39 (ISDIFVFGMGVCWLINYAGMI), 50–70 (MAPLALCCNFAWEMVYGLIYP), and 75–95 (IEQGVFLAGLVVNLGVMYTAI). Asparagine 111 carries N-linked (GlcNAc...) asparagine glycosylation. 4 helical membrane passes run 112–132 (ITLIFALGVLGSLTGHLALAA), 134–154 (IGPALGYSWGAVACQLLLSVG), 169–189 (SYTLWLSRFIGSGCVVGFAIL), and 205–225 (LVLWSLGVFIAVDSLYGICLW).

It belongs to the paxB family.

The protein localises to the membrane. It functions in the pathway secondary metabolite biosynthesis. Its function is as follows. Terpene cyclase; part of the gene cluster that mediates the biosynthesis of the indole diterpenes nodulisporic acids (NA). Nodulisporic acid A (NAA) and its chemically modified derivatives are of particular significance because of their highly potent insecticidal activity against blood-feeding arthropods and lack of observable adverse effects on mammals, in particular the tremogenicity associated with the paspaline-derived IDTs is not observed. The geranylgeranyl diphosphate (GGPP) synthase ggs1, localized outside of the cluster, is proposed to catalyze the first step in nodulisporic acid biosynthesis via conversion of farnesyl pyrophosphate and isopentyl pyrophosphate into geranylgeranyl pyrophosphate (GGPP). Condensation of indole-3-glycerol phosphate with GGPP by the prenyl transferase nodC then forms 3-geranylgeranylindole (3-GGI). Epoxidation by the FAD-dependent monooxygenase nodM leads to a single-epoxidized-GGI that is substrate of the terpene cyclase nodB for cyclization to yield emindole SB. The terminal methyl carbon, C28, of emindole SB is then oxidized by the cytochrome P450 monooxygenase nodW to produce nodulisporic acid F (NAF), the pentacyclic core of NAA. NAF is converted to nodulisporic acid E (NAE) via prenylation. This step is probably performed by one of the indole diterpene prenyltransferases nodD1 or nodD2. Several oxidation steps performed by the FAD-linked oxidoreductase nodO and one of the cytochrome P450 monooxygenase nodR, nodX or nodZ further convert NAE to nodulisporic acid D (NAD). NAD is substrate of cytochrome P450 monooxygenase nodJ to produce the precursor of nodulisporic acid C (NAC), converted to NAC by one of the indole diterpene prenyltransferases nodD1 or nodD2. The FAD-dependent monooxygenase nodY2 then oxidizes NAC to nodulisporic acid B (NAB). Finally NAB is converted to NAA by one of the cytochrome P450 monooxygenases nodR, nodX or nodZ. The polypeptide is Terpene cyclase nodB (Hypoxylon pulicicidum).